A 254-amino-acid chain; its full sequence is tRNA uridine(34) hydroxylase (254 aa).

Residues 123 to 217 (QDPNVILLDT…YLESIPEGES (95 aa)) form the Rhodanese domain. Cys-177 functions as the Cysteine persulfide intermediate in the catalytic mechanism.

The protein belongs to the TrhO family.

The catalysed reaction is uridine(34) in tRNA + AH2 + O2 = 5-hydroxyuridine(34) in tRNA + A + H2O. Functionally, catalyzes oxygen-dependent 5-hydroxyuridine (ho5U) modification at position 34 in tRNAs. The protein is tRNA uridine(34) hydroxylase of Legionella pneumophila (strain Lens).